Consider the following 300-residue polypeptide: N-acetylmuramic acid 6-phosphate etherase (300 aa).

Positions 55–217 constitute an SIS domain; the sequence is IAERLRAGGR…STGAMIRLGK (163 aa). Glutamate 83 acts as the Proton donor in catalysis. The active site involves glutamate 114.

Belongs to the GCKR-like family. MurNAc-6-P etherase subfamily. Homodimer.

It carries out the reaction N-acetyl-D-muramate 6-phosphate + H2O = N-acetyl-D-glucosamine 6-phosphate + (R)-lactate. Its pathway is amino-sugar metabolism; N-acetylmuramate degradation. In terms of biological role, specifically catalyzes the cleavage of the D-lactyl ether substituent of MurNAc 6-phosphate, producing GlcNAc 6-phosphate and D-lactate. The protein is N-acetylmuramic acid 6-phosphate etherase of Symbiobacterium thermophilum (strain DSM 24528 / JCM 14929 / IAM 14863 / T).